The primary structure comprises 523 residues: 2-isopropylmalate synthase (523 aa).

The Pyruvate carboxyltransferase domain occupies 5–267; that stretch reads VIIFDTTLRD…ETGINAKEIH (263 aa). Mn(2+) is bound by residues aspartate 14, histidine 202, histidine 204, and asparagine 238. A regulatory domain region spans residues 392 to 523; the sequence is KLQQLVVHSD…QQNKRELGGV (132 aa).

It belongs to the alpha-IPM synthase/homocitrate synthase family. LeuA type 1 subfamily. In terms of assembly, homodimer. Mn(2+) serves as cofactor.

The protein localises to the cytoplasm. It carries out the reaction 3-methyl-2-oxobutanoate + acetyl-CoA + H2O = (2S)-2-isopropylmalate + CoA + H(+). It functions in the pathway amino-acid biosynthesis; L-leucine biosynthesis; L-leucine from 3-methyl-2-oxobutanoate: step 1/4. In terms of biological role, catalyzes the condensation of the acetyl group of acetyl-CoA with 3-methyl-2-oxobutanoate (2-ketoisovalerate) to form 3-carboxy-3-hydroxy-4-methylpentanoate (2-isopropylmalate). This Shewanella pealeana (strain ATCC 700345 / ANG-SQ1) protein is 2-isopropylmalate synthase.